Consider the following 368-residue polypeptide: DNA replication and repair protein RecF (368 aa).

30-37 (GNNAQGKT) contributes to the ATP binding site.

Belongs to the RecF family.

Its subcellular location is the cytoplasm. Its function is as follows. The RecF protein is involved in DNA metabolism; it is required for DNA replication and normal SOS inducibility. RecF binds preferentially to single-stranded, linear DNA. It also seems to bind ATP. The protein is DNA replication and repair protein RecF of Streptococcus pyogenes serotype M18 (strain MGAS8232).